Here is a 191-residue protein sequence, read N- to C-terminus: Penicillin-binding protein activator LpoB (191 aa).

The signal sequence occupies residues 1–16; that stretch reads MKRYLSLALAALVLTG. The N-palmitoyl cysteine moiety is linked to residue Cys-17. A lipid anchor (S-diacylglycerol cysteine) is attached at Cys-17.

It belongs to the LpoB family. In terms of assembly, interacts with PBP1b.

Its subcellular location is the cell outer membrane. Regulator of peptidoglycan synthesis that is essential for the function of penicillin-binding protein 1B (PBP1b). The chain is Penicillin-binding protein activator LpoB from Yersinia pestis (strain D182038).